A 711-amino-acid polypeptide reads, in one-letter code: Exotoxin translocation ATP-binding protein PaxB (711 aa).

Residues 1–129 form the Peptidase C39 domain; that stretch reads MEPLMSFKQK…QVFQGNVILL (129 aa). 5 helical membrane-spanning segments follow: residues 157-177, 195-215, 273-293, 299-319, and 392-412; these read IFVEVMIVSIFLQLFALITPL, LNVITVALAIVVIFEIVLSGL, ALTSVLDLLFSFIFFAVMWYY, IVILLSLPCYIAWSIFISPIL, and VMIINLWLGAHLVISGDLSIG. The 283-residue stretch at 158-440 folds into the ABC transmembrane type-1 domain; it reads FVEVMIVSIF…LAQLWQDFQQ (283 aa). Residues 472–707 form the ABC transporter domain; the sequence is VTFKNIRFRY…KDGLYYYLNQ (236 aa). 506–513 provides a ligand contact to ATP; it reads GRSGSGKS.

This sequence belongs to the ABC transporter superfamily. Protein-1 exporter (TC 3.A.1.109) family. As to quaternary structure, homodimer.

It localises to the cell inner membrane. The catalysed reaction is ATP + H2O + proteinSide 1 = ADP + phosphate + proteinSide 2.. Part of the ABC transporter complex PaxBD involved in PaxA export. Transmembrane domains (TMD) form a pore in the inner membrane and the ATP-binding domain (NBD) is responsible for energy generation. This Pasteurella aerogenes protein is Exotoxin translocation ATP-binding protein PaxB (paxB).